A 225-amino-acid chain; its full sequence is Chromosome partition protein MukE (225 aa).

Residues 197 to 225 (RDGEAMPIENHLQLNDETEENQPDSGEEE) form a disordered region. The span at 212–225 (DETEENQPDSGEEE) shows a compositional bias: acidic residues.

This sequence belongs to the MukE family. Interacts, and probably forms a ternary complex, with MukF and MukB. The complex formation is stimulated by calcium or magnesium.

It localises to the cytoplasm. Its subcellular location is the nucleoid. In terms of biological role, involved in chromosome condensation, segregation and cell cycle progression. May participate in facilitating chromosome segregation by condensation DNA from both sides of a centrally located replisome during cell division. Probably acts via its interaction with MukB and MukF. The protein is Chromosome partition protein MukE of Escherichia coli O157:H7.